Here is a 1070-residue protein sequence, read N- to C-terminus: Phosphatidylinositol 4,5-bisphosphate 3-kinase catalytic subunit beta isoform (1070 aa).

In terms of domain architecture, PI3K-ABD spans 26 to 115 (SDGSISVDFL…LPVLKLVTRS (90 aa)). The PI3K-RBD domain maps to 194 to 285 (GGKLVVAVHF…RTLPHFILVE (92 aa)). Ser324 carries the post-translational modification Phosphoserine. One can recognise a C2 PI3K-type domain in the interval 327–496 (WGNNNPFQIV…NATALHIKFP (170 aa)). A Nuclear localization signal (NLS) motif is present at residues 410 to 418 (KVKTKKSTK). The region spanning 524 to 701 (ANVSSRGGKK…GVILEAYCRG (178 aa)) is the PIK helical domain. The region spanning 772–1053 (YVEKCRYMDS…KFDEALRESW (282 aa)) is the PI3K/PI4K catalytic domain. The interval 778–784 (YMDSKMK) is G-loop. The interval 916-924 (GIGDRHSDN) is catalytic loop. Residues 935–961 (HIDFGHILGNFKSKFGIKRERVPFILT) form an activation loop region. Ser1070 carries the phosphoserine; by autocatalysis modification.

It belongs to the PI3/PI4-kinase family. In terms of assembly, heterodimer of a catalytic subunit PIK3CB and a p85 regulatory subunit (PIK3R1, PIK3R2 or PIK3R3). Interaction with PIK3R2 is required for nuclear localization and nuclear export. Part of a complex with PIK3R1 and PTEN. Binding to PTEN may antagonize the lipid kinase activity under normal growth conditions. Part of a complex involved in autophagosome formation composed of PIK3C3 and PIK3R4. Interacts with BECN1, ATG14 and RAB5A. Autophosphorylation at Ser-1070 negatively regulates the phosphatidylinositol-4,5-bisphosphate 3-kinase activity.

The protein localises to the cytoplasm. Its subcellular location is the nucleus. The catalysed reaction is a 1,2-diacyl-sn-glycero-3-phospho-(1D-myo-inositol-4,5-bisphosphate) + ATP = a 1,2-diacyl-sn-glycero-3-phospho-(1D-myo-inositol-3,4,5-trisphosphate) + ADP + H(+). The enzyme catalyses 1-octadecanoyl-2-(5Z,8Z,11Z,14Z)-eicosatetraenoyl-sn-glycero-3-phospho-1D-myo-inositol 4,5-bisphosphate + ATP = 1-octadecanoyl-2-(5Z,8Z,11Z,14Z-eicosatetraenoyl)-sn-glycero-3-phospho-(1D-myo-inositol 3,4,5-triphosphate) + ADP + H(+). It carries out the reaction L-seryl-[protein] + ATP = O-phospho-L-seryl-[protein] + ADP + H(+). It functions in the pathway phospholipid metabolism; phosphatidylinositol phosphate biosynthesis. Phosphoinositide-3-kinase (PI3K) phosphorylates phosphatidylinositol (PI) derivatives at position 3 of the inositol ring to produce 3-phosphoinositides. Uses ATP and PtdIns(4,5)P2 (phosphatidylinositol 4,5-bisphosphate) to generate phosphatidylinositol 3,4,5-trisphosphate (PIP3). PIP3 plays a key role by recruiting PH domain-containing proteins to the membrane, including AKT1 and PDPK1, activating signaling cascades involved in cell growth, survival, proliferation, motility and morphology. Involved in the activation of AKT1 upon stimulation by G-protein coupled receptors (GPCRs) ligands such as CXCL12, sphingosine 1-phosphate, and lysophosphatidic acid. May also act downstream receptor tyrosine kinases. Required in different signaling pathways for stable platelet adhesion and aggregation. Plays a role in platelet activation signaling triggered by GPCRs, alpha-IIb/beta-3 integrins (ITGA2B/ ITGB3) and ITAM (immunoreceptor tyrosine-based activation motif)-bearing receptors such as GP6. Regulates the strength of adhesion of ITGA2B/ ITGB3 activated receptors necessary for the cellular transmission of contractile forces. Required for platelet aggregation induced by F2 (thrombin) and thromboxane A2 (TXA2). Has a role in cell survival. May have a role in cell migration. Involved in the early stage of autophagosome formation. Modulates the intracellular level of PtdIns3P (phosphatidylinositol 3-phosphate) and activates PIK3C3 kinase activity. May act as a scaffold, independently of its lipid kinase activity to positively regulate autophagy. May have a role in insulin signaling as scaffolding protein in which the lipid kinase activity is not required. May have a kinase-independent function in regulating cell proliferation and in clathrin-mediated endocytosis. Mediator of oncogenic signal in cell lines lacking PTEN. The lipid kinase activity is necessary for its role in oncogenic transformation. Required for the growth of ERBB2 and RAS driven tumors. Also has a protein kinase activity showing autophosphorylation. The chain is Phosphatidylinositol 4,5-bisphosphate 3-kinase catalytic subunit beta isoform (Pik3cb) from Rattus norvegicus (Rat).